A 374-amino-acid chain; its full sequence is All-trans-retinol dehydrogenase [NAD(+)] ADH7 (374 aa).

Positions 47, 68, 98, 101, 104, 112, and 174 each coordinate Zn(2+). Residues glycine 199 to glycine 204, aspartate 223, lysine 228, valine 292 to alanine 294, and arginine 369 each bind NAD(+).

The protein belongs to the zinc-containing alcohol dehydrogenase family. Class-IV subfamily. Homodimer. Zn(2+) serves as cofactor. High expression in the stomach mucosa. Lower expression in eye, thymus, skin and ovary. Very low expression in small intestine, liver and uterus.

The protein localises to the cytoplasm. The catalysed reaction is a primary alcohol + NAD(+) = an aldehyde + NADH + H(+). It carries out the reaction 10-hydroxydecanoate + NAD(+) = 10-oxodecanoate + NADH + H(+). The enzyme catalyses all-trans-retinol + NAD(+) = all-trans-retinal + NADH + H(+). It catalyses the reaction 9-cis-retinol + NAD(+) = 9-cis-retinal + NADH + H(+). The catalysed reaction is all-trans-3,4-didehydroretinol + NAD(+) = all-trans-3,4-didehydroretinal + NADH + H(+). It carries out the reaction all-trans-4-hydroxyretinol + NAD(+) = all-trans-4-hydroxyretinal + NADH + H(+). The enzyme catalyses all-trans-4-oxoretinol + NAD(+) = all-trans-4-oxoretinal + NADH + H(+). It catalyses the reaction 12-hydroxydodecanoate + NAD(+) = 12-oxododecanoate + NADH + H(+). The catalysed reaction is 16-hydroxyhexadecanoate + NAD(+) = 16-oxohexadecanoate + NADH + H(+). It carries out the reaction hexan-1-ol + NAD(+) = hexanal + NADH + H(+). The enzyme catalyses (E)-hex-2-en-1-ol + NAD(+) = (E)-hex-2-enal + NADH + H(+). It catalyses the reaction (E)-4-hydroxynon-2-en-1-ol + NAD(+) = (E)-4-hydroxynon-2-enal + NADH + H(+). With respect to regulation, retinol oxidation is inhibited by the detergent Tween 80. Ethanol inhibits both all-trans-retinol and 9-cis-retinol oxidation. 13-cis-retinol is an effective competitive inhibitor of the 9-cis-retinol oxidation. All-trans-retinoic acid is a powerful inhibitor of all-trans-retinol oxidation. 13-cis-retinoic acid is a powerful inhibitor of all-trans-retinol oxidation. Cimetidine competitively inhibited ethanol oxidation. Catalyzes the NAD-dependent oxidation of all-trans-retinol, alcohol, aldehyde and omega-hydroxy fatty acids and their derivatives. Oxidizes preferentially all trans-retinol, all-trans-4-hydroxyretinol, 9-cis-retinol, 2-hexenol, and long chain omega-hydroxy fatty acids such as juniperic acid. In vitro can also catalyze the NADH-dependent reduction of all-trans-retinal and aldehydes and their derivatives. Reduces preferentially all trans-retinal, all-trans-4-oxoretinal and hexanal. Catalyzes in the oxidative direction with higher efficiency. Therefore may participate in retinoid metabolism, fatty acid omega-oxidation, and elimination of cytotoxic aldehydes produced by lipid peroxidation. The chain is All-trans-retinol dehydrogenase [NAD(+)] ADH7 (Adh7) from Mus musculus (Mouse).